The following is a 1323-amino-acid chain: uncharacterized protein (1323 aa).

Positions 1 to 11 are enriched in basic and acidic residues; sequence MRELQGDDSSR. 2 disordered regions span residues 1–57 and 79–112; these read MREL…SSYY and IHES…HSET. The span at 12-21 shows a compositional bias: low complexity; it reads KSPPSDSVVK. Residue S24 is modified to Phosphoserine. Residues 27–40 are compositionally biased toward basic and acidic residues; sequence DYEHSLKSLQDERT. Composition is skewed to polar residues over residues 42–57 and 80–105; these read NYPN…SSYY and HESS…SSTI. WD repeat units follow at residues 271–314, 320–360, 364–403, 409–449, 453–494, and 502–551; these read RHST…DRAI, GHTR…FPVN, DWHN…APLH, ENIT…EEPE, TTDS…KEGP, and GHTD…LNSM. The region spanning 671 to 779 is the RWD domain; sequence EELSWIGQKY…SYLSGNLSVD (109 aa). Positions 879–888 are enriched in polar residues; it reads SNSVADSDST. The segment at 879-904 is disordered; that stretch reads SNSVADSDSTNYDDENSLNRGGTSES. The segment at 1265–1309 adopts an RING-type; degenerate zinc-finger fold; that stretch reads CTFCCLSIHGLCIVCGLCLHVMHEDCYKEWFSNGDSISQSCSSGC.

This sequence belongs to the WD repeat WDR59 family.

Functionally, may be involved in telomere capping. This is an uncharacterized protein from Schizosaccharomyces pombe (strain 972 / ATCC 24843) (Fission yeast).